The sequence spans 160 residues: SsrA-binding protein (160 aa).

The tract at residues 135 to 160 (KTHDKRETIKERDWKREQSRILRDRG) is disordered. Residues 138-160 (DKRETIKERDWKREQSRILRDRG) are compositionally biased toward basic and acidic residues.

Belongs to the SmpB family.

The protein resides in the cytoplasm. Its function is as follows. Required for rescue of stalled ribosomes mediated by trans-translation. Binds to transfer-messenger RNA (tmRNA), required for stable association of tmRNA with ribosomes. tmRNA and SmpB together mimic tRNA shape, replacing the anticodon stem-loop with SmpB. tmRNA is encoded by the ssrA gene; the 2 termini fold to resemble tRNA(Ala) and it encodes a 'tag peptide', a short internal open reading frame. During trans-translation Ala-aminoacylated tmRNA acts like a tRNA, entering the A-site of stalled ribosomes, displacing the stalled mRNA. The ribosome then switches to translate the ORF on the tmRNA; the nascent peptide is terminated with the 'tag peptide' encoded by the tmRNA and targeted for degradation. The ribosome is freed to recommence translation, which seems to be the essential function of trans-translation. The protein is SsrA-binding protein of Sphingomonas elodea.